The primary structure comprises 655 residues: p-hydroxybenzoic acid efflux pump subunit AaeB (655 aa).

The next 11 helical transmembrane spans lie at 13-33, 38-58, 69-89, 93-113, 121-141, 152-172, 370-390, 407-427, 431-451, 459-479, and 482-502; these read FAVK…HFQL, WAVL…GGEP, LRII…IAMI, LLMI…SSLV, WGLA…EPLL, EIVI…PRSI, LFWL…IAVV, FIYG…VIIP, QSML…GIEV, MGAL…TFHF, and FLDS…VILL.

The protein belongs to the aromatic acid exporter ArAE (TC 2.A.85) family.

Its subcellular location is the cell inner membrane. Functionally, forms an efflux pump with AaeA. Could function as a metabolic relief valve, allowing to eliminate certain compounds when they accumulate to high levels in the cell. The sequence is that of p-hydroxybenzoic acid efflux pump subunit AaeB from Shigella sonnei (strain Ss046).